Reading from the N-terminus, the 1012-residue chain is ATP-dependent DNA helicase MPH1 (1012 aa).

The 168-residue stretch at 94 to 261 (IVQKSLYQNT…EVVNNLNISN (168 aa)) folds into the Helicase ATP-binding domain. 107 to 114 (IPTGMGKT) is an ATP binding site. Positions 209–212 (DEAH) match the DEAH box motif. In terms of domain architecture, Helicase C-terminal spans 430 to 654 (KLQKIINELS…NFVEYKKSDR (225 aa)). A disordered region spans residues 493-555 (DEGFIRKNKP…AQISGMNQKQ (63 aa)). Residues 498-510 (RKNKPKGRKKADR) show a composition bias toward basic residues. The segment covering 511-537 (LKRLEEDKQKQLSKAKQKEQEKVERSS) has biased composition (basic and acidic residues).

Belongs to the DEAD box helicase family. DEAH subfamily. FANCM sub-subfamily. In terms of assembly, interacts with the MHF histone-fold complex to form the FANCM-MHF complex.

The protein localises to the nucleus. It carries out the reaction ATP + H2O = ADP + phosphate + H(+). Functionally, ATP-dependent DNA helicase involved in DNA damage repair by homologous recombination and in genome maintenance. Capable of unwinding D-loops. Plays a role in limiting crossover recombinants during mitotic DNA double-strand break (DSB) repair. Component of a FANCM-MHF complex which promotes gene conversion at blocked replication forks, probably by reversal of the stalled fork. In Vanderwaltozyma polyspora (strain ATCC 22028 / DSM 70294 / BCRC 21397 / CBS 2163 / NBRC 10782 / NRRL Y-8283 / UCD 57-17) (Kluyveromyces polysporus), this protein is ATP-dependent DNA helicase MPH1.